Consider the following 158-residue polypeptide: NAD(P)H-quinone oxidoreductase subunit N (158 aa).

Belongs to the complex I NdhN subunit family. As to quaternary structure, NDH-1 can be composed of about 15 different subunits; different subcomplexes with different compositions have been identified which probably have different functions.

The protein localises to the cellular thylakoid membrane. It catalyses the reaction a plastoquinone + NADH + (n+1) H(+)(in) = a plastoquinol + NAD(+) + n H(+)(out). It carries out the reaction a plastoquinone + NADPH + (n+1) H(+)(in) = a plastoquinol + NADP(+) + n H(+)(out). In terms of biological role, NDH-1 shuttles electrons from an unknown electron donor, via FMN and iron-sulfur (Fe-S) centers, to quinones in the respiratory and/or the photosynthetic chain. The immediate electron acceptor for the enzyme in this species is believed to be plastoquinone. Couples the redox reaction to proton translocation, and thus conserves the redox energy in a proton gradient. Cyanobacterial NDH-1 also plays a role in inorganic carbon-concentration. The protein is NAD(P)H-quinone oxidoreductase subunit N of Prochlorococcus marinus (strain MIT 9301).